The chain runs to 239 residues: Small ribosomal subunit protein uS2 (239 aa).

It belongs to the universal ribosomal protein uS2 family.

The sequence is that of Small ribosomal subunit protein uS2 from Synechococcus sp. (strain WH7803).